Consider the following 182-residue polypeptide: Probable inosine/xanthosine triphosphatase (182 aa).

Mg(2+) is bound by residues Glu-42 and Asp-69.

The protein belongs to the YjjX NTPase family. In terms of assembly, homodimer. The cofactor is Mg(2+). It depends on Mn(2+) as a cofactor.

The catalysed reaction is XTP + H2O = XDP + phosphate + H(+). It carries out the reaction ITP + H2O = IDP + phosphate + H(+). In terms of biological role, phosphatase that hydrolyzes non-canonical purine nucleotides such as XTP and ITP to their respective diphosphate derivatives. Probably excludes non-canonical purines from DNA/RNA precursor pool, thus preventing their incorporation into DNA/RNA and avoiding chromosomal lesions. The protein is Probable inosine/xanthosine triphosphatase of Methanothermobacter thermautotrophicus (strain ATCC 29096 / DSM 1053 / JCM 10044 / NBRC 100330 / Delta H) (Methanobacterium thermoautotrophicum).